The chain runs to 268 residues: tRNA pseudouridine synthase A (268 aa).

D52 (nucleophile) is an active-site residue. Y110 is a substrate binding site.

The protein belongs to the tRNA pseudouridine synthase TruA family. In terms of assembly, homodimer.

It carries out the reaction uridine(38/39/40) in tRNA = pseudouridine(38/39/40) in tRNA. Functionally, formation of pseudouridine at positions 38, 39 and 40 in the anticodon stem and loop of transfer RNAs. The protein is tRNA pseudouridine synthase A of Prochlorococcus marinus (strain MIT 9301).